Reading from the N-terminus, the 493-residue chain is V-type proton ATPase subunit B (493 aa).

The protein belongs to the ATPase alpha/beta chains family. V-ATPase is a heteromultimeric enzyme composed of a peripheral catalytic V1 complex (main components: subunits A, B, C, D, E, and F) attached to an integral membrane V0 proton pore complex (main component: the proteolipid protein).

Its subcellular location is the cytoplasmic vesicle membrane. It is found in the endosome membrane. It localises to the contractile vacuole membrane. Its function is as follows. Vacuolar ATPase is responsible for acidifying a variety of intracellular compartments in eukaryotic cells. The B subunit is non-catalytic but combines with other subunits to form the catalytic complex. V-ATPase is responsible for energizing electrophoretic K(+)/2H(+) antiport by generating a transmembrane voltage of more than 200 mV. The chain is V-type proton ATPase subunit B (vatB) from Dictyostelium discoideum (Social amoeba).